We begin with the raw amino-acid sequence, 1708 residues long: Clathrin heavy chain 2 (1708 aa).

The segment at 1 to 492 (MAAANAPIAM…VDNDLALKIY (492 aa)) is globular terminal domain. 7 WD40-like repeat regions span residues 25-67 (FVTF…RPIT), 68-113 (ADSA…MPEQ), 114-155 (VVFW…ANLA), 156-205 (NNQI…QALE), 206-270 (AHAA…PDFQ), 271-314 (DDFP…ISPD), and 315-343 (PIFLTAESSASGGFYAINRRGQVLHATVN). A binding site for the uncoating ATPase, involved in lattice disassembly region spans residues 462–478 (ENWLAEDKLECSEELGD). The interval 493–536 (IKARATPKVVAAFAERREFDKILIYSKQVGYTPDYLFLLQTILR) is flexible linker. The segment at 537 to 648 (TDPQGAVNFA…RALQHYTELP (112 aa)) is distal segment. Residues 537 to 1708 (TDPQGAVNFA…AYGMPPMGSY (1172 aa)) form a heavy chain arm region. CHCR repeat units lie at residues 551 to 697 (QMEG…QIVV), 700 to 842 (AKEY…PEDF), 847 to 986 (ILSV…QLID), 993 to 1138 (LPES…VSEA), 1142 to 1283 (FIRA…FRLA), 1288 to 1434 (LNII…DLIN), and 1437 to 1580 (LNVL…KECF). A proximal segment region spans residues 653-1708 (VMVNTHAIEP…AYGMPPMGSY (1056 aa)). Residues 1227–1536 (AAKIIYAFIS…YIYKKAGRWK (310 aa)) are involved in binding clathrin light chain. The interval 1564–1708 (SEDLLVYFIE…AYGMPPMGSY (145 aa)) is trimerization.

This sequence belongs to the clathrin heavy chain family. Clathrin triskelions, composed of 3 heavy chains and 3 light chains, are the basic subunits of the clathrin coat.

It localises to the cytoplasmic vesicle membrane. It is found in the membrane. The protein resides in the coated pit. Functionally, clathrin is the major protein of the polyhedral coat of coated pits and vesicles. The polypeptide is Clathrin heavy chain 2 (Oryza sativa subsp. japonica (Rice)).